A 213-amino-acid chain; its full sequence is Orotate phosphoribosyltransferase (213 aa).

Position 26 (Lys26) interacts with 5-phospho-alpha-D-ribose 1-diphosphate. 34 to 35 contributes to the orotate binding site; it reads FF. 5-phospho-alpha-D-ribose 1-diphosphate is bound by residues 72 to 73, Arg99, Lys100, Lys103, His105, and 124 to 132; these read YK and DDVITAGTA. Orotate is bound by residues Thr128 and Arg156.

This sequence belongs to the purine/pyrimidine phosphoribosyltransferase family. PyrE subfamily. In terms of assembly, homodimer. Mg(2+) is required as a cofactor.

The enzyme catalyses orotidine 5'-phosphate + diphosphate = orotate + 5-phospho-alpha-D-ribose 1-diphosphate. Its pathway is pyrimidine metabolism; UMP biosynthesis via de novo pathway; UMP from orotate: step 1/2. In terms of biological role, catalyzes the transfer of a ribosyl phosphate group from 5-phosphoribose 1-diphosphate to orotate, leading to the formation of orotidine monophosphate (OMP). This Thioalkalivibrio sulfidiphilus (strain HL-EbGR7) protein is Orotate phosphoribosyltransferase.